A 101-amino-acid polypeptide reads, in one-letter code: NADH-quinone oxidoreductase subunit K (101 aa).

3 consecutive transmembrane segments (helical) span residues 4–24, 30–50, and 62–82; these read LGHL…GIFL, IVLL…FIAF, and FVFF…AILV.

Belongs to the complex I subunit 4L family. As to quaternary structure, NDH-1 is composed of 14 different subunits. Subunits NuoA, H, J, K, L, M, N constitute the membrane sector of the complex.

The protein localises to the cell inner membrane. The catalysed reaction is a quinone + NADH + 5 H(+)(in) = a quinol + NAD(+) + 4 H(+)(out). In terms of biological role, NDH-1 shuttles electrons from NADH, via FMN and iron-sulfur (Fe-S) centers, to quinones in the respiratory chain. The immediate electron acceptor for the enzyme in this species is believed to be ubiquinone. Couples the redox reaction to proton translocation (for every two electrons transferred, four hydrogen ions are translocated across the cytoplasmic membrane), and thus conserves the redox energy in a proton gradient. The polypeptide is NADH-quinone oxidoreductase subunit K (Xylella fastidiosa (strain Temecula1 / ATCC 700964)).